We begin with the raw amino-acid sequence, 557 residues long: Anti-Muellerian hormone type-2 receptor (557 aa).

A signal peptide spans 1–17 (MLGTLGLWTLLPAAAQV). At 18 to 144 (SPNRRTCVFF…QEPQATPGGP (127 aa)) the chain is on the extracellular side. Cystine bridges form between C55-C79 and C92-C109. N66 is a glycosylation site (N-linked (GlcNAc...) asparagine). N119 carries an N-linked (GlcNAc...) asparagine glycan. A helical transmembrane segment spans residues 145-165 (IWMAQLLLGVFLVLLLSIIIL). The Cytoplasmic portion of the chain corresponds to 166-557 (ALLQRKACRV…SVQQGSGSKS (392 aa)). The Protein kinase domain occupies 201-511 (LRFSQVIQEG…RLAALAYPQV (311 aa)). Residues 207 to 215 (IQEGGHAVV) and K228 each bind ATP. Catalysis depends on D331, which acts as the Proton acceptor.

This sequence belongs to the protein kinase superfamily. TKL Ser/Thr protein kinase family. TGFB receptor subfamily. As to quaternary structure, interacts with type I receptor ACVR1. Requires Mg(2+) as cofactor. Mn(2+) is required as a cofactor.

The protein resides in the membrane. The enzyme catalyses L-threonyl-[receptor-protein] + ATP = O-phospho-L-threonyl-[receptor-protein] + ADP + H(+). The catalysed reaction is L-seryl-[receptor-protein] + ATP = O-phospho-L-seryl-[receptor-protein] + ADP + H(+). On ligand binding, forms a receptor complex consisting of two type II and two type I transmembrane serine/threonine kinases. Type II receptors phosphorylate and activate type I receptors which autophosphorylate, then bind and activate SMAD transcriptional regulators. Receptor for anti-Muellerian hormone. The chain is Anti-Muellerian hormone type-2 receptor (Amhr2) from Rattus norvegicus (Rat).